The sequence spans 237 residues: 1-(5-phosphoribosyl)-5-[(5-phosphoribosylamino)methylideneamino] imidazole-4-carboxamide isomerase (237 aa).

Asp8 (proton acceptor) is an active-site residue. The active-site Proton donor is the Asp130.

Belongs to the HisA/HisF family.

The protein resides in the cytoplasm. It carries out the reaction 1-(5-phospho-beta-D-ribosyl)-5-[(5-phospho-beta-D-ribosylamino)methylideneamino]imidazole-4-carboxamide = 5-[(5-phospho-1-deoxy-D-ribulos-1-ylimino)methylamino]-1-(5-phospho-beta-D-ribosyl)imidazole-4-carboxamide. It participates in amino-acid biosynthesis; L-histidine biosynthesis; L-histidine from 5-phospho-alpha-D-ribose 1-diphosphate: step 4/9. The polypeptide is 1-(5-phosphoribosyl)-5-[(5-phosphoribosylamino)methylideneamino] imidazole-4-carboxamide isomerase (Halothermothrix orenii (strain H 168 / OCM 544 / DSM 9562)).